Reading from the N-terminus, the 126-residue chain is Histone H2B type 1-P (126 aa).

The disordered stretch occupies residues 1 to 36 (MPEPVKSVPAPKKGSKKAVTKAQKKDGKKRKRSRKE). The residue at position 2 (Pro2) is an N-acetylproline. An ADP-ribosyl glutamic acid modification is found at Glu3. Lys6 is modified (N6-(2-hydroxyisobutyryl)lysine; alternate). The residue at position 6 (Lys6) is an N6-(beta-hydroxybutyryl)lysine; alternate. Lys6 bears the N6-acetyllysine; alternate mark. Lys6 carries the N6-butyryllysine; alternate modification. Lys6 carries the N6-crotonyllysine; alternate modification. Position 6 is an N6-lactoyllysine; alternate (Lys6). Lys6 participates in a covalent cross-link: Glycyl lysine isopeptide (Lys-Gly) (interchain with G-Cter in SUMO2); alternate. Ser7 carries the post-translational modification ADP-ribosylserine. An N6-(beta-hydroxybutyryl)lysine; alternate modification is found at Lys12. Lys12 and Lys13 each carry N6-acetyllysine; alternate. N6-crotonyllysine; alternate is present on residues Lys12 and Lys13. Residue Lys12 is modified to N6-lactoyllysine; alternate. Lys13 is subject to N6-(2-hydroxyisobutyryl)lysine; alternate. Phosphoserine; by STK4/MST1 is present on Ser15. Residues Lys16, Lys17, Lys21, and Lys24 each carry the N6-acetyllysine; alternate modification. An N6-crotonyllysine; alternate mark is found at Lys16, Lys17, Lys21, and Lys24. N6-lactoyllysine; alternate occurs at positions 16, 17, 21, and 24. Residue Lys17 is modified to N6-glutaryllysine; alternate. Residues Lys21 and Lys24 each carry the N6-(2-hydroxyisobutyryl)lysine; alternate modification. N6-(beta-hydroxybutyryl)lysine; alternate is present on Lys21. Lys21 carries the post-translational modification N6-butyryllysine; alternate. A Glycyl lysine isopeptide (Lys-Gly) (interchain with G-Cter in SUMO2); alternate cross-link involves residue Lys21. Residue Lys25 is modified to N6-(2-hydroxyisobutyryl)lysine. Lys35 carries the post-translational modification N6-(2-hydroxyisobutyryl)lysine; alternate. Lys35 carries the N6-(beta-hydroxybutyryl)lysine; alternate modification. Lys35 bears the N6-crotonyllysine; alternate mark. Lys35 is modified (N6-glutaryllysine; alternate). N6-succinyllysine; alternate is present on Lys35. Residue Lys35 forms a Glycyl lysine isopeptide (Lys-Gly) (interchain with G-Cter in ubiquitin); alternate linkage. Glu36 is subject to PolyADP-ribosyl glutamic acid. Ser37 is modified (phosphoserine; by AMPK). Residues Lys44, Lys47, and Lys58 each carry the N6-(2-hydroxyisobutyryl)lysine; alternate modification. Lys44 is subject to N6-lactoyllysine; alternate. An N6-glutaryllysine; alternate mark is found at Lys44 and Lys47. At Lys47 the chain carries N6-methyllysine; alternate. The residue at position 58 (Lys58) is an N6,N6-dimethyllysine; alternate. Dimethylated arginine is present on Arg80. Residue Lys86 is modified to N6-(2-hydroxyisobutyryl)lysine; alternate. N6-acetyllysine; alternate is present on Lys86. Position 86 is an N6-lactoyllysine; alternate (Lys86). Lys86 is subject to N6,N6,N6-trimethyllysine; alternate. Omega-N-methylarginine is present on residues Arg87 and Arg93. Lys109 is modified (N6-(2-hydroxyisobutyryl)lysine; alternate). Lys109 bears the N6-(beta-hydroxybutyryl)lysine; alternate mark. Position 109 is an N6-lactoyllysine; alternate (Lys109). The residue at position 109 (Lys109) is an N6-glutaryllysine; alternate. The residue at position 109 (Lys109) is an N6-methyllysine; alternate. The O-linked (GlcNAc) serine glycan is linked to Ser113. The residue at position 116 (Thr116) is a Phosphothreonine. An N6-(2-hydroxyisobutyryl)lysine; alternate mark is found at Lys117 and Lys121. Lys117 is subject to N6-(beta-hydroxybutyryl)lysine; alternate. N6-lactoyllysine; alternate is present on residues Lys117 and Lys121. N6-glutaryllysine; alternate occurs at positions 117 and 121. 2 positions are modified to N6-succinyllysine; alternate: Lys117 and Lys121. Lys117 bears the N6-methylated lysine; alternate mark. A Glycyl lysine isopeptide (Lys-Gly) (interchain with G-Cter in ubiquitin); alternate cross-link involves residue Lys121.

It belongs to the histone H2B family. In terms of assembly, the nucleosome is a histone octamer containing two molecules each of H2A, H2B, H3 and H4 assembled in one H3-H4 heterotetramer and two H2A-H2B heterodimers. The octamer wraps approximately 147 bp of DNA. Monoubiquitination at Lys-35 (H2BK34Ub) by the MSL1/MSL2 dimer is required for histone H3 'Lys-4' (H3K4me) and 'Lys-79' (H3K79me) methylation and transcription activation at specific gene loci, such as HOXA9 and MEIS1 loci. Similarly, monoubiquitination at Lys-121 (H2BK120Ub) by the RNF20/40 complex gives a specific tag for epigenetic transcriptional activation and is also prerequisite for histone H3 'Lys-4' and 'Lys-79' methylation. It also functions cooperatively with the FACT dimer to stimulate elongation by RNA polymerase II. H2BK120Ub also acts as a regulator of mRNA splicing: deubiquitination by USP49 is required for efficient cotranscriptional splicing of a large set of exons. In terms of processing, phosphorylated on Ser-15 (H2BS14ph) by STK4/MST1 during apoptosis; which facilitates apoptotic chromatin condensation. Also phosphorylated on Ser-15 in response to DNA double strand breaks (DSBs), and in correlation with somatic hypermutation and immunoglobulin class-switch recombination. Phosphorylation at Ser-37 (H2BS36ph) by AMPK in response to stress promotes transcription. Post-translationally, glcNAcylation at Ser-113 promotes monoubiquitination of Lys-121. It fluctuates in response to extracellular glucose, and associates with transcribed genes. ADP-ribosylated by PARP1 or PARP2 on Ser-7 (H2BS6ADPr) in response to DNA damage. H2BS6ADPr promotes recruitment of CHD1L. Mono-ADP-ribosylated on Glu-3 (H2BE2ADPr) by PARP3 in response to single-strand breaks. Poly ADP-ribosylation on Glu-36 (H2BE35ADPr) by PARP1 regulates adipogenesis: it inhibits phosphorylation at Ser-37 (H2BS36ph), thereby blocking expression of pro-adipogenetic genes. In terms of processing, crotonylation (Kcr) is specifically present in male germ cells and marks testis-specific genes in post-meiotic cells, including X-linked genes that escape sex chromosome inactivation in haploid cells. Crotonylation marks active promoters and enhancers and confers resistance to transcriptional repressors. It is also associated with post-meiotically activated genes on autosomes. Post-translationally, hydroxybutyrylation of histones is induced by starvation. Lactylated in macrophages by EP300/P300 by using lactoyl-CoA directly derived from endogenous or exogenous lactate, leading to stimulates gene transcription.

Its subcellular location is the nucleus. It is found in the chromosome. In terms of biological role, core component of nucleosome. Nucleosomes wrap and compact DNA into chromatin, limiting DNA accessibility to the cellular machineries which require DNA as a template. Histones thereby play a central role in transcription regulation, DNA repair, DNA replication and chromosomal stability. DNA accessibility is regulated via a complex set of post-translational modifications of histones, also called histone code, and nucleosome remodeling. This is Histone H2B type 1-P (Hist1h2bp) from Mus musculus (Mouse).